Here is a 262-residue protein sequence, read N- to C-terminus: UPF0619 GPI-anchored membrane protein C1322.10 (262 aa).

The N-terminal stretch at 1 to 20 is a signal peptide; sequence MLARVGTTLFFLANALAAYA. Disordered stretches follow at residues 136–165 and 175–194; these read STSASSTSSSTATPSSSSTTSSSSSSSSST and ISSSASSSVSSSSASSSGSI. N-linked (GlcNAc...) asparagine glycosylation is found at asparagine 207 and asparagine 227. Residue asparagine 242 is the site of GPI-like-anchor amidated asparagine attachment. Residues 243–262 constitute a propeptide, removed in mature form; it reads GVAQLSVAACMGIAALMLIA.

This sequence belongs to the UPF0619 family.

The protein localises to the golgi apparatus membrane. Its subcellular location is the cell membrane. This is UPF0619 GPI-anchored membrane protein C1322.10 from Schizosaccharomyces pombe (strain 972 / ATCC 24843) (Fission yeast).